The primary structure comprises 250 residues: Prolactin-7A2 (250 aa).

The signal sequence occupies residues 1–29 (MQLSFSRPRPWTLLLMVVSNLLLWENVSS). Residues N26, N35, N102, and N134 are each glycosylated (N-linked (GlcNAc...) asparagine). 2 cysteine pairs are disulfide-bonded: C100/C215 and C232/C241.

This sequence belongs to the somatotropin/prolactin family. In terms of tissue distribution, expression restricted to placental tissues. Trophoblast giant cells are found to be the major source.

The protein resides in the secreted. The protein is Prolactin-7A2 (Prl7a2) of Rattus norvegicus (Rat).